Consider the following 536-residue polypeptide: Caspase A (536 aa).

The propeptide at 1–273 (MVLKTIEDNC…DSQSRMPRTD (273 aa)) is removed in mature form by autoprocessing. Active-site residues include His364 and Cys406.

It belongs to the peptidase C14A family. As to quaternary structure, heterodimer formed by the tight association of the large subunit p16 and the small subunit p14. Autocatalytic cleavage removes the propeptide and generates the two active subunits p16 and p14 in vitro. Cannot be cleaved by ced-3 in vitro. Isoform a: Expression is restricted to the late germline pachytene stage of meiosis I in both L4 larvae and adult hermaphrodite gonads. Isoform b: Expression is restricted to the late germline pachytene stage of meiosis I in both L4 larvae and adult hermaphrodite gonads.

It carries out the reaction Strict requirement for an Asp residue at position P1 and has a preferred cleavage sequence of Tyr-Val-Ala-Asp-|-.. With respect to regulation, inhibited by cysteine protease inhibitor iodoacetic acid (CH3COOI) but not by N-[N-(L-3-transcarboxirane-2-carbonyl)-leucyl]-agmatine (E-64) or benzyloxycarbonyl-DEVD-fluoro-methyl ketone (Z-DEVD-FMK). Cysteine protease which, in vitro, cleaves itself and caspase ced-3 into their mature active forms. Also cleaves, in vitro, inactive caspase csp-2 isoform b. Required maternally to induce apoptosis in a subset of cells fated to die during embryogenesis, mostly independently of the ced-9, ced-4 and ced-3 canonical apoptosis pathway. Involved in the degeneration of dopaminergic CEP neurons in response to high Mn(2+) levels. Functionally, dispensable for regulating apoptosis during embryogenesis. The chain is Caspase A from Caenorhabditis elegans.